Reading from the N-terminus, the 651-residue chain is Acetyl-coenzyme A synthetase (651 aa).

CoA-binding positions include 189 to 192 (RGGK), Thr-311, and Asn-335. ATP-binding positions include 387–389 (GEP), 411–416 (DTWWQT), Asp-500, and Arg-515. Ser-523 is a binding site for CoA. Arg-526 is a binding site for ATP. Mg(2+) is bound by residues Val-537, His-539, and Val-542. Arg-584 contributes to the CoA binding site. Residue Lys-609 is modified to N6-acetyllysine.

The protein belongs to the ATP-dependent AMP-binding enzyme family. It depends on Mg(2+) as a cofactor. Acetylated. Deacetylation by the SIR2-homolog deacetylase activates the enzyme.

The enzyme catalyses acetate + ATP + CoA = acetyl-CoA + AMP + diphosphate. Functionally, catalyzes the conversion of acetate into acetyl-CoA (AcCoA), an essential intermediate at the junction of anabolic and catabolic pathways. AcsA undergoes a two-step reaction. In the first half reaction, AcsA combines acetate with ATP to form acetyl-adenylate (AcAMP) intermediate. In the second half reaction, it can then transfer the acetyl group from AcAMP to the sulfhydryl group of CoA, forming the product AcCoA. The protein is Acetyl-coenzyme A synthetase of Allorhizobium ampelinum (strain ATCC BAA-846 / DSM 112012 / S4) (Agrobacterium vitis (strain S4)).